The following is a 467-amino-acid chain: Ankyrin repeat and SOCS box protein 10 (467 aa).

7 ANK repeats span residues 115 to 144 (ELTTPLHVAASRGHTEVLELLLRRRAKPDS), 147 to 176 (GGRTALHEACSAGHAACVRVLLVAGADPNT), 180 to 209 (DGKRPLHLCRGPGILECVELLLKFGAQVDG), 214 to 243 (EEETPLHIAARLGHVELADLLLRWGACPDV), 247 to 289 (EGWT…DADA), 293 to 322 (DKQRPLHLACRHGHSAVVQLLLSCGVNANA), and 326 to 361 (GGHTPLHCALLGPTTAVAHSPEHTVRDLLNHGAVRV). Residues 412-467 (YSSLFALVRQPRSLQHLCRCALRSHLEGCLPHALPRLPLPPRMLRFLQLDFEDLLY) form the SOCS box domain.

Belongs to the ankyrin SOCS box (ASB) family.

It is found in the nucleus. It localises to the cytoplasm. The protein operates within protein modification; protein ubiquitination. May be a substrate-recognition component of a SCF-like ECS (Elongin-Cullin-SOCS-box protein) E3 ubiquitin-protein ligase complex which mediates the ubiquitination and subsequent proteasomal degradation of target proteins. The polypeptide is Ankyrin repeat and SOCS box protein 10 (Asb10) (Mus musculus (Mouse)).